Here is a 791-residue protein sequence, read N- to C-terminus: Nuclear cap-binding protein subunit 1 (791 aa).

The span at 1–14 (MSRRRHSDENDGGP) shows a compositional bias: basic and acidic residues. The segment at 1–24 (MSRRRHSDENDGGPHHKRRKTSEP) is disordered. Residues 28–240 (EDRLESLICR…CLWAQIQKLK (213 aa)) enclose the MIF4G domain. A coiled-coil region spans residues 641-714 (LHSTIRKMNK…SEQKNLFLVI (74 aa)). Residues 668-687 (KQHKHRDSDDNDEDSGRKDG) are disordered.

Belongs to the NCBP1 family. Component of the nuclear cap-binding complex (CBC), a heterodimer composed of ncbp1/cbp80 and ncbp2/cbp20 that interacts with m7GpppG-capped RNA. Component of an alternative nuclear cap-binding complex (CBC) composed of ncbp1/cbp80 and ncbp3.

It localises to the nucleus. The protein localises to the cytoplasm. Component of the cap-binding complex (CBC), which binds cotranscriptionally to the 5'-cap of pre-mRNAs and is involved in various processes such as pre-mRNA splicing, translation regulation, nonsense-mediated mRNA decay, RNA-mediated gene silencing (RNAi) by microRNAs (miRNAs) and mRNA export. The CBC complex is involved in mRNA export from the nucleus, leading to the recruitment of the mRNA export machinery to the 5'-end of mRNA and to mRNA export in a 5' to 3' direction through the nuclear pore. The CBC complex is also involved in mediating U snRNA and intronless mRNAs export from the nucleus. The CBC complex is essential for a pioneer round of mRNA translation, before steady state translation when the CBC complex is replaced by cytoplasmic cap-binding protein eIF4E. The pioneer round of mRNA translation mediated by the CBC complex plays a central role in nonsense-mediated mRNA decay (NMD), NMD only taking place in mRNAs bound to the CBC complex, but not on eIF4E-bound mRNAs. The CBC complex enhances NMD in mRNAs containing at least one exon-junction complex (EJC), promoting the interaction between UPF1 and UPF2. The CBC complex is also involved in 'failsafe' NMD, which is independent of the EJC complex, while it does not participate in Staufen-mediated mRNA decay (SMD). During cell proliferation, the CBC complex is also involved in microRNAs (miRNAs) biogenesis via its interaction with SRRT/ARS2 and is required for miRNA-mediated RNA interference. The CBC complex also acts as a negative regulator of parn, thereby acting as an inhibitor of mRNA deadenylation. In the CBC complex, ncbp1/cbp80 does not bind directly capped RNAs (m7GpppG-capped RNA) but is required to stabilize the movement of the N-terminal loop of ncbp2/cbp20 and lock the CBC into a high affinity cap-binding state with the cap structure. Associates with NCBP3 to form an alternative cap-binding complex (CBC) which plays a key role in mRNA export. The conventional CBC with NCBP2 binds both small nuclear RNA (snRNA) and messenger (mRNA) and is involved in their export from the nucleus whereas the alternative CBC with NCBP3 does not bind snRNA and associates only with mRNA thereby playing a role only in mRNA export. In Xenopus tropicalis (Western clawed frog), this protein is Nuclear cap-binding protein subunit 1 (ncbp1).